The chain runs to 20 residues: Antiviral protein Y3 (20 aa).

This chain is Antiviral protein Y3, found in Pleurotus citrinopileatus (Golden oyster mushroom).